A 53-amino-acid polypeptide reads, in one-letter code: MRNKERNFPNQNNNKFEGEPRAKAEYASKRANGTTNTHPQERMHASGKRDDNF.

The tract at residues 1–53 (MRNKERNFPNQNNNKFEGEPRAKAEYASKRANGTTNTHPQERMHASGKRDDNF) is disordered. 2 stretches are compositionally biased toward basic and acidic residues: residues 16 to 28 (FEGEPRAKAEYAS) and 39 to 53 (PQERMHASGKRDDNF).

It belongs to the SspK family.

It localises to the spore core. The polypeptide is Small, acid-soluble spore protein K (Geobacillus sp. (strain WCH70)).